The following is a 264-amino-acid chain: MADCAAPVGVFDSGVGGLSVLREIRQRLPHESLLYLADSAHVPYGEKSPEYIRERCRVIAAFFVEKGAKALVVACNTATAAGVTELRELYPQLPIIAMEPAVKPAALATRSGVVGVLATTGTLKSAKFAALLDRFAADVRVITQPCPGLVERIEAGDLESADTRAMLMGWVEPMLAQGCDTLILGCTHYPFIRPLLQQLLPNDIRLIDTGAAVARHLREMLAERHLLASGDATQRFYCSGDPQRMARVLPILWGENAVVEFFPS.

Substrate-binding positions include 12-13 (DS) and 44-45 (YG). Cysteine 75 functions as the Proton donor/acceptor in the catalytic mechanism. 76 to 77 (NT) is a binding site for substrate. The active-site Proton donor/acceptor is cysteine 186. 187–188 (TH) lines the substrate pocket.

This sequence belongs to the aspartate/glutamate racemases family.

The enzyme catalyses L-glutamate = D-glutamate. Its pathway is cell wall biogenesis; peptidoglycan biosynthesis. Functionally, provides the (R)-glutamate required for cell wall biosynthesis. This chain is Glutamate racemase, found in Stutzerimonas stutzeri (strain A1501) (Pseudomonas stutzeri).